A 258-amino-acid chain; its full sequence is Regulatory protein RecX (258 aa).

This sequence belongs to the RecX family.

It is found in the cytoplasm. Functionally, modulates RecA activity. In Streptococcus pyogenes serotype M12 (strain MGAS2096), this protein is Regulatory protein RecX.